The chain runs to 378 residues: Queuine tRNA-ribosyltransferase (378 aa).

Catalysis depends on aspartate 90, which acts as the Proton acceptor. Residues aspartate 90–phenylalanine 94, aspartate 144, glutamine 188, and glycine 220 each bind substrate. The tract at residues glycine 251–aspartate 257 is RNA binding. Aspartate 270 (nucleophile) is an active-site residue. Residues threonine 275–arginine 279 form an RNA binding; important for wobble base 34 recognition region. Residues cysteine 308, cysteine 310, cysteine 313, and histidine 339 each coordinate Zn(2+).

This sequence belongs to the queuine tRNA-ribosyltransferase family. In terms of assembly, homodimer. Within each dimer, one monomer is responsible for RNA recognition and catalysis, while the other monomer binds to the replacement base PreQ1. Zn(2+) serves as cofactor.

The enzyme catalyses 7-aminomethyl-7-carbaguanine + guanosine(34) in tRNA = 7-aminomethyl-7-carbaguanosine(34) in tRNA + guanine. It functions in the pathway tRNA modification; tRNA-queuosine biosynthesis. In terms of biological role, catalyzes the base-exchange of a guanine (G) residue with the queuine precursor 7-aminomethyl-7-deazaguanine (PreQ1) at position 34 (anticodon wobble position) in tRNAs with GU(N) anticodons (tRNA-Asp, -Asn, -His and -Tyr). Catalysis occurs through a double-displacement mechanism. The nucleophile active site attacks the C1' of nucleotide 34 to detach the guanine base from the RNA, forming a covalent enzyme-RNA intermediate. The proton acceptor active site deprotonates the incoming PreQ1, allowing a nucleophilic attack on the C1' of the ribose to form the product. After dissociation, two additional enzymatic reactions on the tRNA convert PreQ1 to queuine (Q), resulting in the hypermodified nucleoside queuosine (7-(((4,5-cis-dihydroxy-2-cyclopenten-1-yl)amino)methyl)-7-deazaguanosine). In Nautilia profundicola (strain ATCC BAA-1463 / DSM 18972 / AmH), this protein is Queuine tRNA-ribosyltransferase.